We begin with the raw amino-acid sequence, 376 residues long: Glucose-1-phosphate adenylyltransferase (376 aa).

Residues Y101, G166, 181 to 182 (EK), and S192 each bind alpha-D-glucose 1-phosphate.

The protein belongs to the bacterial/plant glucose-1-phosphate adenylyltransferase family. Homotetramer.

The catalysed reaction is alpha-D-glucose 1-phosphate + ATP + H(+) = ADP-alpha-D-glucose + diphosphate. The protein operates within glycan biosynthesis; glycogen biosynthesis. Its function is as follows. Involved in the biosynthesis of ADP-glucose, a building block required for the elongation reactions to produce glycogen. Catalyzes the reaction between ATP and alpha-D-glucose 1-phosphate (G1P) to produce pyrophosphate and ADP-Glc. The chain is Glucose-1-phosphate adenylyltransferase from Bacillus cytotoxicus (strain DSM 22905 / CIP 110041 / 391-98 / NVH 391-98).